The primary structure comprises 126 residues: Glycine cleavage system H protein (126 aa).

One can recognise a Lipoyl-binding domain in the interval 22 to 104; sequence VVFIGITDYA…YGAGWIIKVK (83 aa). Lysine 63 carries the post-translational modification N6-lipoyllysine.

Belongs to the GcvH family. The glycine cleavage system is composed of four proteins: P, T, L and H. The cofactor is (R)-lipoate.

The glycine cleavage system catalyzes the degradation of glycine. The H protein shuttles the methylamine group of glycine from the P protein to the T protein. The chain is Glycine cleavage system H protein from Porphyromonas gingivalis (strain ATCC 33277 / DSM 20709 / CIP 103683 / JCM 12257 / NCTC 11834 / 2561).